A 98-amino-acid chain; its full sequence is Small ribosomal subunit protein eS24 (98 aa).

The protein belongs to the eukaryotic ribosomal protein eS24 family. As to quaternary structure, part of the 30S ribosomal subunit.

This is Small ribosomal subunit protein eS24 from Thermococcus kodakarensis (strain ATCC BAA-918 / JCM 12380 / KOD1) (Pyrococcus kodakaraensis (strain KOD1)).